The chain runs to 193 residues: Phosphatidylglycerophosphatase and protein-tyrosine phosphatase 1 (193 aa).

The N-terminal 31 residues, 1-31 (MAASAWLEAGLARVLFYPTLLYTVFRGRVRG), are a transit peptide targeting the mitochondrion. The Tyrosine-protein phosphatase domain maps to 37-188 (WYHRIDHTVL…LKEFHKEITA (152 aa)). Lysine 85 is subject to N6-succinyllysine. Cysteine 132 serves as the catalytic Phosphocysteine intermediate.

It belongs to the protein-tyrosine phosphatase family. Non-receptor class dual specificity subfamily. Interacts with STYXL1; the interaction inhibits PTPMT1 catalytic activity. As to expression, predominantly expressed in testis. Expressed at lower level in heart, brain, spleen, lung, liver, skeletal muscle, kidney, bone marrow, eye, lymph node, smooth muscle, prostate, thymus, stomach and uterus.

It is found in the mitochondrion inner membrane. The catalysed reaction is a 1,2-diacyl-sn-glycero-3-phospho-(1'-sn-glycero-3'-phosphate) + H2O = a 1,2-diacyl-sn-glycero-3-phospho-(1'-sn-glycerol) + phosphate. It carries out the reaction O-phospho-L-tyrosyl-[protein] + H2O = L-tyrosyl-[protein] + phosphate. The enzyme catalyses O-phospho-L-seryl-[protein] + H2O = L-seryl-[protein] + phosphate. It catalyses the reaction O-phospho-L-threonyl-[protein] + H2O = L-threonyl-[protein] + phosphate. The catalysed reaction is 1,2-di-(9Z-octadecenoyl)-sn-glycero-3-phospho-(1'-sn-glycerol-3'-phosphate) + H2O = 1,2-di-(9Z-octadecenoyl)-sn-glycero-3-phospho-(1'-sn-glycerol) + phosphate. It carries out the reaction 1,2-dioctanoyl-sn-glycero-3-phospho-(1D-myo-inositol-5-phosphate) + H2O = 1,2-dioctanoyl-sn-glycero-3-phospho-(1D-myo-inositol) + phosphate. The enzyme catalyses a 1-acyl-2-hexanoyl-sn-glycero-3-phospho-(1D-myo-inositol-5-phosphate) + H2O = a 1-acyl-2-hexanoyl-sn-glycero-3-phospho-(1D-myo-inositol) + phosphate. It catalyses the reaction 1,2-dibutyryl-sn-glycero-3-phospho-(1D-myo-inositol-5-phosphate) + H2O = 1,2-dibutyryl-sn-glycero-3-phospho-(1D-myo-inositol) + phosphate. Its pathway is phospholipid metabolism; phosphatidylglycerol biosynthesis; phosphatidylglycerol from CDP-diacylglycerol: step 2/2. Its function is as follows. Lipid phosphatase which dephosphorylates phosphatidylglycerophosphate (PGP) to phosphatidylglycerol (PG). PGP is an essential intermediate in the biosynthetic pathway of cardiolipin, a mitochondrial-specific phospholipid regulating the membrane integrity and activities of the organelle. Has also been shown to display phosphatase activity toward phosphoprotein substrates, specifically mediates dephosphorylation of mitochondrial proteins, thereby playing an essential role in ATP production. Has probably a preference for proteins phosphorylated on Ser and/or Thr residues compared to proteins phosphorylated on Tyr residues. Probably involved in regulation of insulin secretion in pancreatic beta cells. May prevent intrinsic apoptosis, probably by regulating mitochondrial membrane integrity. The chain is Phosphatidylglycerophosphatase and protein-tyrosine phosphatase 1 from Mus musculus (Mouse).